The following is a 70-amino-acid chain: MNSNDLAKRGESLIRHSTNRYLTTVRIAFRAKQRRFDDFDGLLEESTVKPVQRAIIELSDEQDQPDLLPG.

It belongs to the RNA polymerase subunit omega family. As to quaternary structure, in cyanobacteria the RNAP catalytic core is composed of 2 alpha, 1 beta, 1 beta', 1 gamma and 1 omega subunit. When a sigma factor is associated with the core the holoenzyme is formed, which can initiate transcription.

It carries out the reaction RNA(n) + a ribonucleoside 5'-triphosphate = RNA(n+1) + diphosphate. In terms of biological role, promotes RNA polymerase assembly. Latches the N- and C-terminal regions of the beta' subunit thereby facilitating its interaction with the beta and alpha subunits. This chain is DNA-directed RNA polymerase subunit omega, found in Prochlorococcus marinus (strain NATL1A).